The following is a 503-amino-acid chain: Sarpagan bridge enzyme 1 (503 aa).

A helical; Signal-anchor for type II membrane protein membrane pass occupies residues 3 to 23 (ISVTTSIALATIVFFLYKLAT). Position 442 (C442) interacts with heme.

The protein belongs to the cytochrome P450 family. Heme serves as cofactor. As to expression, highly expressed in roots. Expressed at low levels in leaves, stems and flowers.

Its subcellular location is the endoplasmic reticulum membrane. The catalysed reaction is (19E)-geissoschizine + reduced [NADPH--hemoprotein reductase] + O2 = polyneuridine aldehyde + oxidized [NADPH--hemoprotein reductase] + 2 H2O + H(+). It catalyses the reaction tetrahydroalstonine + A + reduced [NADPH--hemoprotein reductase] + O2 = alstonine + AH2 + oxidized [NADPH--hemoprotein reductase] + 2 H2O + H(+). It carries out the reaction ajmalicine + A + reduced [NADPH--hemoprotein reductase] + O2 = serpentine + AH2 + oxidized [NADPH--hemoprotein reductase] + 2 H2O + H(+). It participates in alkaloid biosynthesis; ajmaline biosynthesis. Monooxygenase involved in the biosynthesis of ajmaline-type monoterpenoid indole alkaloids (MIAs) natural products, important plant-derived pharmaceuticals used in the therapy of heart disorders. Converts by cyclization the strictosidine-derived geissoschizine to the sarpagan alkaloid polyneuridine aldehyde, precursor of vomilenine, an intermediate chemical in the biosynthesis of ajmaline. Converts by aromatization the tetrahydro-beta-carboline alkaloids tetrahydroalstonine and ajmalicine to the corresponding beta-carboline alkaloids alstonine and serpentine, respectively. In Rauvolfia serpentina (Serpentine wood), this protein is Sarpagan bridge enzyme 1.